A 177-amino-acid chain; its full sequence is Thioredoxin M-type, chloroplastic (177 aa).

The transit peptide at 1 to 64 directs the protein to the chloroplast; that stretch reads MAAFTCTSSP…SRLRRGGIIC (64 aa). Positions 65–177 constitute a Thioredoxin domain; the sequence is EAQDTATGIP…LATSIDKFLQ (113 aa). Catalysis depends on nucleophile residues Cys101 and Cys104. Residues Cys101 and Cys104 are joined by a disulfide bond.

This sequence belongs to the thioredoxin family. Plant M-type subfamily. In terms of assembly, forms a complex with heterodimeric ferredoxin-thioredoxin reductase (FTR) and ferredoxin.

It is found in the plastid. Its subcellular location is the chloroplast. In terms of biological role, participates in various redox reactions through the reversible oxidation of the active center dithiol to a disulfide. The M form is known to activate NADP-malate dehydrogenase. The sequence is that of Thioredoxin M-type, chloroplastic from Brassica napus (Rape).